Reading from the N-terminus, the 297-residue chain is Coatomer subunit epsilon-2 (297 aa).

Belongs to the COPE family. As to quaternary structure, oligomeric complex that consists of at least the alpha, beta, beta', gamma, delta, epsilon and zeta subunits.

It is found in the cytoplasm. The protein resides in the golgi apparatus membrane. Its subcellular location is the cytoplasmic vesicle. The protein localises to the COPI-coated vesicle membrane. Functionally, the coatomer is a cytosolic protein complex that binds to dilysine motifs and reversibly associates with Golgi non-clathrin-coated vesicles, which further mediate biosynthetic protein transport from the ER, via the Golgi up to the trans Golgi network. The coatomer complex is required for budding from Golgi membranes, and is essential for the retrograde Golgi-to-ER transport of dilysine-tagged proteins. This Oryza sativa subsp. indica (Rice) protein is Coatomer subunit epsilon-2.